The chain runs to 956 residues: DNA repair endonuclease UVH1 (956 aa).

The Nuclear localization signal signature appears at 256 to 272; sequence RRQLDPIWHTLGKRTKQ. 3 disordered regions span residues 343 to 363, 516 to 593, and 697 to 718; these read HVKN…SVEA, TTDM…RPSG, and SSTE…GGRK. Residues 697 to 711 are compositionally biased toward polar residues; the sequence is SSTEFPASSTQNSLT. The region spanning 725-805 is the ERCC4 domain; that stretch reads QVIVDMREFM…IPVLLIEFSQ (81 aa).

The protein belongs to the XPF family. In terms of assembly, heterodimer with ERCC1/RAD10. In terms of tissue distribution, isoform 1 and isoform 2 are widely expressed, predominantly in flowers, meristems and stems. Isoform 3 is detected at low levels.

The protein resides in the nucleus. Seems to be involved in nucleotide excision repair (NER) of damaged DNA (dark repair mechanism). Involved in repair of UV light, and probably oxidative damage. The UVH1/RAD1-ERCC1/RAD10 complex may act as an endonuclease making DNA incision 5' to the lesion site. In vitro, is implicated in double strand breaks (DSBs) repair and is required for homologous recombination in the presence of non-homologous overhangs. May mediate the induction of a DNA-damage sensitive cell-cycle checkpoint during the G2 phase. This Arabidopsis thaliana (Mouse-ear cress) protein is DNA repair endonuclease UVH1 (UVH1).